The sequence spans 143 residues: Putative pre-16S rRNA nuclease (143 aa).

The protein belongs to the YqgF nuclease family.

The protein localises to the cytoplasm. Functionally, could be a nuclease involved in processing of the 5'-end of pre-16S rRNA. The sequence is that of Putative pre-16S rRNA nuclease from Ralstonia pickettii (strain 12J).